We begin with the raw amino-acid sequence, 73 residues long: Mitofissin (73 aa).

This sequence belongs to the ?ATG44? family. Homooligomer. Found as homooctamer in solution, but binds to membranes either as a monomer, dimer, or tetramer, not as an octamer.

It is found in the mitochondrion intermembrane space. Its subcellular location is the vacuole. Functionally, mitochondrial fission factor that acts directly on lipid membranes to drive mitochondrial fission required for mitophagy. Directly binds to lipid membranes and brings about lipid membrane fragility to facilitate membrane fission and engulfment of mitochondria by the phagophore. The chain is Mitofissin from Saccharomyces cerevisiae (strain ATCC 204508 / S288c) (Baker's yeast).